The following is a 192-amino-acid chain: Interleukin-18 (192 aa).

The propeptide occupies 1-35 (MAAIPVDDCINFVGMKFIDNTLYFVADSDENLETD).

Belongs to the IL-1 family. As to quaternary structure, forms a ternary complex with ligand-binding receptor subunit IL18R1 and signaling receptor subunit IL18RAP at the plasma membrane. Mature IL18 first binds to IL18R1 forming a low affinity binary complex, which then interacts with IL18RAP to form a high affinity ternary complex that signals inside the cell. Interacts with cargo receptor TMED10; the interaction mediates the translocation from the cytoplasm into the ERGIC (endoplasmic reticulum-Golgi intermediate compartment) and thereby secretion. Post-translationally, the pro-IL-18 precursor is processed by CASP1, CASP4 or CASP5 to yield its mature, active form. The pro-IL-18 precursor features autoinhibitory interactions between the propeptide and the post-cleavage-site region, preventing recognition by the IL18R1 receptor. Processing by CASP1, CASP4 or CASP5 induces conformational changes to generate critical receptor-binding sites. The mature form is then secreted and released in the extracellular milieu by passing through the gasdermin-D (GSDMD) pore. In contrast, cleavage by CASP3 inactivates IL18.

It localises to the cytoplasm. Its subcellular location is the cytosol. The protein resides in the secreted. Pro-inflammatory cytokine primarily involved in epithelial barrier repair, polarized T-helper 1 (Th1) cell and natural killer (NK) cell immune responses. Upon binding to IL18R1 and IL18RAP, forms a signaling ternary complex which activates NF-kappa-B, triggering synthesis of inflammatory mediators. Synergizes with IL12/interleukin-12 to induce IFNG synthesis from T-helper 1 (Th1) cells and natural killer (NK) cells. Involved in transduction of inflammation downstream of pyroptosis: its mature form is specifically released in the extracellular milieu by passing through the gasdermin-D (GSDMD) pore. This chain is Interleukin-18 (IL18), found in Felis catus (Cat).